The chain runs to 189 residues: MAQNGSEGPLLAGVAGRYALALYELARDEGQVDDVAKNLDAFDALYRESADLRRLVKSPAFSAEEQTAAVGALLDRAGISGLAANFIKLSAANRRLFALPDMIRAYREKVREAKGIVRAEVRVAEKPSDAVIEDIKASLRDVAKSEVDIDLHIDPSLIGGIVVKMGSRMVDASLRTKLNSIRLAMREAR.

It belongs to the ATPase delta chain family. F-type ATPases have 2 components, F(1) - the catalytic core - and F(0) - the membrane proton channel. F(1) has five subunits: alpha(3), beta(3), gamma(1), delta(1), epsilon(1). F(0) has three main subunits: a(1), b(2) and c(10-14). The alpha and beta chains form an alternating ring which encloses part of the gamma chain. F(1) is attached to F(0) by a central stalk formed by the gamma and epsilon chains, while a peripheral stalk is formed by the delta and b chains.

It localises to the cell inner membrane. Functionally, f(1)F(0) ATP synthase produces ATP from ADP in the presence of a proton or sodium gradient. F-type ATPases consist of two structural domains, F(1) containing the extramembraneous catalytic core and F(0) containing the membrane proton channel, linked together by a central stalk and a peripheral stalk. During catalysis, ATP synthesis in the catalytic domain of F(1) is coupled via a rotary mechanism of the central stalk subunits to proton translocation. In terms of biological role, this protein is part of the stalk that links CF(0) to CF(1). It either transmits conformational changes from CF(0) to CF(1) or is implicated in proton conduction. The polypeptide is ATP synthase subunit delta (Methylorubrum populi (strain ATCC BAA-705 / NCIMB 13946 / BJ001) (Methylobacterium populi)).